A 364-amino-acid chain; its full sequence is Succinyl-diaminopimelate desuccinylase (364 aa).

Position 64 (H64) interacts with Zn(2+). The active site involves D66. Residue D95 participates in Zn(2+) binding. The active-site Proton acceptor is E125. Zn(2+) is bound by residues E126, E154, and H339.

It belongs to the peptidase M20A family. DapE subfamily. As to quaternary structure, homodimer. The cofactor is Zn(2+). Co(2+) serves as cofactor.

The catalysed reaction is N-succinyl-(2S,6S)-2,6-diaminopimelate + H2O = (2S,6S)-2,6-diaminopimelate + succinate. It participates in amino-acid biosynthesis; L-lysine biosynthesis via DAP pathway; LL-2,6-diaminopimelate from (S)-tetrahydrodipicolinate (succinylase route): step 3/3. In terms of biological role, catalyzes the hydrolysis of N-succinyl-L,L-diaminopimelic acid (SDAP), forming succinate and LL-2,6-diaminopimelate (DAP), an intermediate involved in the bacterial biosynthesis of lysine and meso-diaminopimelic acid, an essential component of bacterial cell walls. The polypeptide is Succinyl-diaminopimelate desuccinylase (Nitratiruptor sp. (strain SB155-2)).